The following is a 377-amino-acid chain: Tryptophan 2,3-dioxygenase (377 aa).

Substrate contacts are provided by residues 57-61 (FIITH) and arginine 128. Histidine 313 is a binding site for heme. Residue threonine 328 coordinates substrate.

The protein belongs to the tryptophan 2,3-dioxygenase family. Homotetramer. Dimer of dimers. Requires heme as cofactor.

The catalysed reaction is L-tryptophan + O2 = N-formyl-L-kynurenine. Its pathway is amino-acid degradation; L-tryptophan degradation via kynurenine pathway; L-kynurenine from L-tryptophan: step 1/2. It participates in pigment biosynthesis; ommochrome biosynthesis. Functionally, heme-dependent dioxygenase that catalyzes the oxidative cleavage of the L-tryptophan (L-Trp) pyrrole ring and converts L-tryptophan to N-formyl-L-kynurenine. Catalyzes the oxidative cleavage of the indole moiety. This Drosophila grimshawi (Hawaiian fruit fly) protein is Tryptophan 2,3-dioxygenase.